The following is a 1458-amino-acid chain: Secretory phospholipase A2 receptor (1458 aa).

A signal peptide spans 1–23 (MLLSLLLLLLLGAPRRCTEGAAA). Topologically, residues 24–1393 (ALSPERVLKW…EHPGKGPSHS (1370 aa)) are extracellular. 17 disulfides stabilise this stretch: C49–C62, C87–C104, C176–C202, C190–C217, C258–C352, C328–C344, C404–C499, C476–C491, C615–C632, C697–C794, C772–C786, C838–C935, C912–C927, C1065–C1085, C1207–C1221, C1278–C1373, and C1350–C1365. The Ricin B-type lectin domain occupies 49-113 (CIQAGKSVLT…CDSTHVSLRW (65 aa)). A glycan (N-linked (GlcNAc...) asparagine) is linked at N91. The region spanning 171–219 (AHGTPCMFPFQYNHQWHHECTREGRQDDSLWCATTSRYERDEKWGFCPD) is the Fibronectin type-II domain. C-type lectin domains are found at residues 227 to 356 (CDAV…KKYL), 374 to 502 (TDCE…CKKP), 511 to 645 (SGCQ…KQPV), 660 to 798 (HPCY…KIPR), 815 to 939 (LFHQ…KRKT), 954 to 1098 (GTCP…EKIQ), 1117 to 1231 (LEYG…AICH), and 1243 to 1376 (ELCS…CKMK). Residues N408, N431, and N452 are each glycosylated (N-linked (GlcNAc...) asparagine). A helical transmembrane segment spans residues 1394–1416 (IVPLAVALTLVVILAIITLSFYI). The Cytoplasmic segment spans residues 1417–1458 (YKQNKGFFRRLAGVGNSYYPTTNFSTIHLEENILISDLEKND). The short motif at 1432–1438 (NSYYPTT) is the Endocytosis signal element.

Interacts with sPLA2-IB/PLA2G1B; this interaction mediates intracellular signaling as well as clearance of extracellular sPLA2-IB/PLA2G1B via endocytotic pathway. Interacts with sPLA2-X/PLA2G10; this interaction mediates sPLA2-X/PLA2G10 clearance and inactivation. The secretory phospholipase A2 receptor form may be produced by the action of metalloproteinases. It contains all extracellular domains and only lacks transmembrane and cytosolic regions. It is however unclear whether this form is produced by proteolytic cleavage as suggested by some experiments, or by alternative splicing. As to expression, lung, skeletal muscle, brain, kidney and heart.

It is found in the cell membrane. Its subcellular location is the secreted. Receptor for secretory phospholipase A2 (sPLA2). Also able to bind to snake PA2-like toxins. Although its precise function remains unclear, binding of sPLA2 to its receptor participates in both positive and negative regulation of sPLA2 functions as well as clearance of sPLA2. Binding of sPLA2-IB/PLA2G1B induces various effects depending on the cell type, such as activation of the mitogen-activated protein kinase (MAPK) cascade to induce cell proliferation, the production of lipid mediators, selective release of arachidonic acid in bone marrow-derived mast cells. In neutrophils, binding of sPLA2-IB/PLA2G1B can activate p38 MAPK to stimulate elastase release and cell adhesion. May be involved in responses in pro-inflammatory cytokine productions during endotoxic shock. Also has endocytic properties and rapidly internalizes sPLA2 ligands, which is particularly important for the clearance of extracellular sPLA2s to protect their potent enzymatic activities. The soluble secretory phospholipase A2 receptor form is circulating and acts as a negative regulator of sPLA2 functions by blocking the biological functions of sPLA2-IB/PLA2G1B and sPLA2-X/PLA2G10. The polypeptide is Secretory phospholipase A2 receptor (PLA2R1) (Oryctolagus cuniculus (Rabbit)).